A 278-amino-acid polypeptide reads, in one-letter code: Neuronal membrane glycoprotein M6-a (278 aa).

M1 carries the N-acetylmethionine modification. The Cytoplasmic portion of the chain corresponds to 1 to 22; the sequence is MEENMEEGQTQKGCFECCIKCL. A helical transmembrane segment spans residues 23–43; that stretch reads GGIPYASLIATILLYAGVALF. Residues 44–84 lie on the Extracellular side of the membrane; the sequence is CGCGHEALSGTVNILQTYFEMARTAGDTLDVFTMIDIFKYV. Residues 85-105 form a helical membrane-spanning segment; that stretch reads IYGIAAAFFVYGILLMVEGFF. Over 106–127 the chain is Cytoplasmic; sequence TTGAIKDLYGDFKITTCGRCVS. The chain crosses the membrane as a helical span at residues 128–148; that stretch reads AWFIMLTYLFMLAWLGVTAFT. Residues 149–213 lie on the Extracellular side of the membrane; that stretch reads SLPVYMYFNV…STELNMTFHL (65 aa). N164 is a glycosylation site (N-linked (GlcNAc...) asparagine). C174 and C192 are joined by a disulfide. N-linked (GlcNAc...) asparagine glycosylation is present at N208. A helical membrane pass occupies residues 214–234; sequence FIVALAGAGAAVIAMVHYLMV. Residues 235 to 278 lie on the Cytoplasmic side of the membrane; it reads LSANWAYVKDACRMQKYEDIKSKEEQELHDIHSTRSKERLNAYT. S256 carries the phosphoserine modification. Residue T278 is modified to Phosphothreonine.

The protein belongs to the myelin proteolipid protein family. In terms of assembly, interacts with OPRM1. Interacts with palmitoyltransferase ZDHHC17/HIP14; the interaction leads to palmitoylation of GPM6A. In terms of processing, N-glycosylated. Palmitoylated by ZDHHC17/HIP14. Expressed in hippocampus (at protein level). Isoform 1 is the predominant isoform expressed in brain, specifically in hippocampus. Isoform 2 is expressed at low levels in brain and kidney.

It is found in the cell membrane. Its subcellular location is the cell projection. It localises to the axon. The protein localises to the growth cone. The protein resides in the dendritic spine. It is found in the filopodium. Its subcellular location is the neuron projection. Its function is as follows. Involved in neuronal differentiation, including differentiation and migration of neuronal stem cells. Plays a role in neuronal plasticity and is involved in neurite and filopodia outgrowth, filopodia motility and probably synapse formation. Gpm6a-induced filopodia formation involves mitogen-activated protein kinase (MAPK) and Src signaling pathways. May be involved in neuronal NGF-dependent Ca(2+) influx. May be involved in regulation of endocytosis and intracellular trafficking of G-protein-coupled receptors (GPCRs); enhances internalization and recycling of mu-type opioid receptor. This Rattus norvegicus (Rat) protein is Neuronal membrane glycoprotein M6-a (Gpm6a).